The chain runs to 242 residues: Probable transcriptional regulatory protein XOO1543 (242 aa).

Belongs to the TACO1 family.

The protein resides in the cytoplasm. This Xanthomonas oryzae pv. oryzae (strain MAFF 311018) protein is Probable transcriptional regulatory protein XOO1543.